Reading from the N-terminus, the 336-residue chain is Dihydroorotate dehydrogenase (quinone) (336 aa).

FMN is bound by residues 62–66 and threonine 86; that span reads AGLDK. Lysine 66 provides a ligand contact to substrate. 111-115 is a binding site for substrate; it reads NRMGF. 2 residues coordinate FMN: asparagine 139 and asparagine 172. Asparagine 172 serves as a coordination point for substrate. Serine 175 serves as the catalytic Nucleophile. Asparagine 177 lines the substrate pocket. FMN contacts are provided by lysine 217 and threonine 245. 246–247 lines the substrate pocket; it reads NT. Residues glycine 268, glycine 297, and 318–319 contribute to the FMN site; that span reads YS.

Belongs to the dihydroorotate dehydrogenase family. Type 2 subfamily. Monomer. FMN is required as a cofactor.

The protein resides in the cell membrane. It catalyses the reaction (S)-dihydroorotate + a quinone = orotate + a quinol. Its pathway is pyrimidine metabolism; UMP biosynthesis via de novo pathway; orotate from (S)-dihydroorotate (quinone route): step 1/1. Functionally, catalyzes the conversion of dihydroorotate to orotate with quinone as electron acceptor. The chain is Dihydroorotate dehydrogenase (quinone) from Citrobacter koseri (strain ATCC BAA-895 / CDC 4225-83 / SGSC4696).